Reading from the N-terminus, the 88-residue chain is Small ribosomal subunit protein uS17 (88 aa).

This sequence belongs to the universal ribosomal protein uS17 family. In terms of assembly, part of the 30S ribosomal subunit.

One of the primary rRNA binding proteins, it binds specifically to the 5'-end of 16S ribosomal RNA. This chain is Small ribosomal subunit protein uS17, found in Nitratidesulfovibrio vulgaris (strain DSM 19637 / Miyazaki F) (Desulfovibrio vulgaris).